A 178-amino-acid polypeptide reads, in one-letter code: CRISPR system ring nuclease SSO2081 (178 aa).

Residues 105–106 (RK) are transition state stabilizer.

This sequence belongs to the cOA ring nuclease family. Homodimer. It depends on Does not require a metal cofactor. as a cofactor.

Its subcellular location is the cytoplasm. It carries out the reaction cyclic tetraadenylate = 2 5'-hydroxy-diadenylate 2',3'-cylic phosphate. Functionally, CRISPR (clustered regularly interspaced short palindromic repeat) is an adaptive immune system that provides protection against mobile genetic elements (viruses, transposable elements and conjugative plasmids). CRISPR clusters contain spacers, sequences complementary to antecedent mobile elements, and target invading nucleic acids. CRISPR clusters are transcribed and processed into CRISPR RNA (crRNA). A nuclease that degrades cyclic oligoadenylates (cOA), second messengers that induce an antiviral state important for defense against invading nucleic acids. Destruction of cOA deactivates the Csx1 ribonuclease, preventing uncontrolled degradation of cellular RNA. Degrades cA4 (a tetraadenylate ring) into a linear diadenylate product with 5'-OH and 2',3'-cyclic phosphate termini. Is 10-fold more active than SSO1393, suggesting this is the major cA4 degradation enzyme. Is highly specific for cA4; it has very poor activity on cA6 and no discernible activity against a number of cyclic dinucleotides. There may be 2 active sites per homodimer. This chain is CRISPR system ring nuclease SSO2081, found in Saccharolobus solfataricus (strain ATCC 35092 / DSM 1617 / JCM 11322 / P2) (Sulfolobus solfataricus).